The chain runs to 272 residues: uncharacterized protein (272 aa).

The N-terminal stretch at 1–20 (MMEPKSIFLLGLLLFRVGKL) is a signal peptide.

This is an uncharacterized protein from Caenorhabditis elegans.